Here is a 2134-residue protein sequence, read N- to C-terminus: Genome polyprotein (2134 aa).

Topologically, residues 1-1377 (MSKLFSTVGR…WLFEKIKTSK (1377 aa)) are cytoplasmic. Positions 781–882 (IVICSGEKAK…GDYGTKEGEK (102 aa)) constitute an LRAT domain. Catalysis depends on residues His791 and His802. The Acyl-thioester intermediate role is filled by Cys863. Positions 1127–1289 (LNKLGRLDKP…EEFSTHAMLD (163 aa)) constitute an SF3 helicase domain. 1153–1160 (GNRGGGKS) provides a ligand contact to ATP. The stretch at 1378 to 1392 (WYILGCVGAALSVSV) is an intramembrane region. The Cytoplasmic segment spans residues 1393–2134 (LGVFAYHMIK…VKDRVIDDSF (742 aa)). Tyr1415 bears the O-(5'-phospho-RNA)-tyrosine mark. The Peptidase C3 domain maps to 1431–1643 (DAQSVVDISN…ITKEMIEEML (213 aa)). Catalysis depends on for protease 3C activity residues His1477, Asp1515, and Cys1603. A RdRp catalytic domain is found at 1880–2001 (DLVVGLDFSN…CIKKESLDQK (122 aa)).

Belongs to the picornaviridae polyprotein family. Specific enzymatic cleavages by the viral protease in vivo yield a variety of precursors and mature proteins. During virion maturation, non-infectious particles are rendered infectious following cleavage of VP0. This maturation cleavage is followed by a conformational change of the particle. Post-translationally, VPg is uridylylated by the polymerase and is covalently linked to the 5'-end of genomic RNA. This uridylylated form acts as a nucleotide-peptide primer for the polymerase.

The protein resides in the virion. It localises to the host cytoplasm. Its subcellular location is the host cytoplasmic vesicle membrane. The catalysed reaction is RNA(n) + a ribonucleoside 5'-triphosphate = RNA(n+1) + diphosphate. The enzyme catalyses a ribonucleoside 5'-triphosphate + H2O = a ribonucleoside 5'-diphosphate + phosphate + H(+). It catalyses the reaction Selective cleavage of Gln-|-Gly bond in the poliovirus polyprotein. In other picornavirus reactions Glu may be substituted for Gln, and Ser or Thr for Gly.. In terms of biological role, capsid proteins VP1, VP2, and VP3 form a closed capsid enclosing the viral positive strand RNA genome. All these proteins contain a beta-sheet structure called beta-barrel jelly roll. Together they form an icosahedral capsid (T=3) composed of 60 copies of each VP1, VP2, and VP3, with a diameter of approximately 300 Angstroms. VP1 is situated at the 12 fivefold axes, whereas VP2 and VP3 are located at the quasi-sixfold axes. VP0 precursor is a component of immature procapsids. The N-terminal domain of VP0, protein VP4, is needed for the assembly of 12 pentamers into the icosahedral structure. Unlike other picornaviruses, AEV VP4 may not be myristoylated. Its function is as follows. Protein 2B and 2BC precursor affect membrane integrity and cause an increase in membrane permeability. Functionally, associates with and induces structural rearrangements of intracellular membranes. It displays RNA-binding, nucleotide binding and NTPase activities. In terms of biological role, protein 3A, via its hydrophobic domain, serves as membrane anchor. Protein 3B is covalently linked to the 5'-end of both the positive-strand and negative-strand genomic RNAs. It acts as a genome-linked replication primer. Its function is as follows. Cysteine protease that generates mature viral proteins from the precursor polyprotein. In addition to its proteolytic activity, it binds to viral RNA, and thus influences viral genome replication. RNA and substrate bind cooperatively to the protease. Functionally, RNA-directed RNA polymerase 3D-POL replicates genomic and antigenomic RNA by recognizing replications specific signals. The chain is Genome polyprotein from Avian encephalomyelitis virus (strain L2Z) (AEV).